We begin with the raw amino-acid sequence, 103 residues long: Trp operon repressor homolog (103 aa).

Residues 59 to 82 (QRQISQMLGVGIATITRGSNELKS) mediate DNA binding.

It belongs to the TrpR family. As to quaternary structure, homodimer.

It is found in the cytoplasm. Functionally, this protein is an aporepressor. When complexed with L-tryptophan it binds the operator region of the trp operon and prevents the initiation of transcription. In Vibrio parahaemolyticus serotype O3:K6 (strain RIMD 2210633), this protein is Trp operon repressor homolog.